A 93-amino-acid polypeptide reads, in one-letter code: Aspartyl/glutamyl-tRNA(Asn/Gln) amidotransferase subunit C (93 aa).

This sequence belongs to the GatC family. In terms of assembly, heterotrimer of A, B and C subunits.

It carries out the reaction L-glutamyl-tRNA(Gln) + L-glutamine + ATP + H2O = L-glutaminyl-tRNA(Gln) + L-glutamate + ADP + phosphate + H(+). It catalyses the reaction L-aspartyl-tRNA(Asn) + L-glutamine + ATP + H2O = L-asparaginyl-tRNA(Asn) + L-glutamate + ADP + phosphate + 2 H(+). Allows the formation of correctly charged Asn-tRNA(Asn) or Gln-tRNA(Gln) through the transamidation of misacylated Asp-tRNA(Asn) or Glu-tRNA(Gln) in organisms which lack either or both of asparaginyl-tRNA or glutaminyl-tRNA synthetases. The reaction takes place in the presence of glutamine and ATP through an activated phospho-Asp-tRNA(Asn) or phospho-Glu-tRNA(Gln). This Methanococcoides burtonii (strain DSM 6242 / NBRC 107633 / OCM 468 / ACE-M) protein is Aspartyl/glutamyl-tRNA(Asn/Gln) amidotransferase subunit C.